A 60-amino-acid polypeptide reads, in one-letter code: Large ribosomal subunit protein bL32 (60 aa).

Residues 1 to 60 (MAVQQNKKSPSKRGMHRSHNALTVPGIAVESTTGETHLRHHISPTGFYRGRKVLKTKSEA) form a disordered region. Basic residues-rich tracts occupy residues 9–19 (SPSKRGMHRSH) and 49–60 (RGRKVLKTKSEA).

Belongs to the bacterial ribosomal protein bL32 family.

The polypeptide is Large ribosomal subunit protein bL32 (Polaromonas sp. (strain JS666 / ATCC BAA-500)).